A 314-amino-acid chain; its full sequence is Three-prime repair exonuclease 1 (314 aa).

Residues Asp18 and Glu20 each coordinate Mg(2+). 20–21 serves as a coordination point for substrate; that stretch reads EA. Ser78 is subject to Phosphoserine. Tyr129 contributes to the substrate binding site. The residue at position 167 (Ser167) is a Phosphoserine. His195 serves as the catalytic Proton donor/acceptor. Asp200 provides a ligand contact to Mg(2+). Asp200 contacts substrate. The interval 236–314 is necessary for endoplasmic reticulum localization; it reads TASARTKPRP…YGLSLATPGE (79 aa). Residues 240–278 are disordered; the sequence is RTKPRPSAVTTTAHLATTRNTSPSLGESRGTKDLPPVKD. The segment at 243–314 is interaction with UBQLN1; that stretch reads PRPSAVTTTA…YGLSLATPGE (72 aa). Low complexity predominate over residues 247–260; that stretch reads AVTTTAHLATTRNT. Ser261 is subject to Phosphoserine. Residues 281 to 314 are necessary for cytoplasmic retention; that stretch reads ALSREGLLAPLGLLAILTLAVATLYGLSLATPGE.

The protein belongs to the exonuclease superfamily. TREX family. As to quaternary structure, homodimer. Interacts (via proline-rich region) with TCERG1/CA150 (via the second WW domain). Component of the SET complex, composed of at least ANP32A, APEX1, HMGB2, NME1, SET and TREX1. Within this complex, directly interacts with SET; this interaction does not result in TREX1 inhibition. Also interacts with NME1, but only following translocation to the nucleus. Directly interacts with UBQLN1 (via ubiquitin-like domain); the interaction may control TREX1 subcellular location. Requires Mg(2+) as cofactor. Post-translationally, ubiquitinated, but not targeted to proteasomal degradation. Ubiquitination may be important for interaction with UBQLN1. In terms of tissue distribution, detected in thymus, spleen, liver, brain, heart, small intestine and colon.

Its subcellular location is the nucleus. It is found in the cytoplasm. The protein resides in the cytosol. The protein localises to the endoplasmic reticulum membrane. It catalyses the reaction Exonucleolytic cleavage in the 3'- to 5'-direction to yield nucleoside 5'-phosphates.. In terms of biological role, major cellular 3'-to-5' DNA exonuclease which digests single-stranded DNA (ssDNA) and double-stranded DNA (dsDNA) with mismatched 3' termini. Prevents cell-intrinsic initiation of autoimmunity. Acts by metabolizing DNA fragments from endogenous retroelements, including L1, LTR and SINE elements. Plays a key role in degradation of DNA fragments at cytosolic micronuclei arising from genome instability: its association with the endoplasmic reticulum membrane directs TREX1 to ruptured micronuclei, leading to micronuclear DNA degradation. Micronuclear DNA degradation is required to limit CGAS activation and subsequent inflammation. Unless degraded, these DNA fragments accumulate in the cytosol and activate the cGAS-STING innate immune signaling, leading to the production of type I interferon. Prevents chronic ATM-dependent checkpoint activation, by processing ssDNA polynucleotide species arising from the processing of aberrant DNA replication intermediates. Inefficiently degrades oxidized DNA, such as that generated upon antimicrobial reactive oxygen production or upon absorption of UV light. During GZMA-mediated cell death, contributes to DNA damage in concert with NME1. NME1 nicks one strand of DNA and TREX1 removes bases from the free 3' end to enhance DNA damage and prevent DNA end reannealing and rapid repair. This chain is Three-prime repair exonuclease 1, found in Homo sapiens (Human).